A 120-amino-acid polypeptide reads, in one-letter code: Large ribosomal subunit protein uL18 (120 aa).

The protein belongs to the universal ribosomal protein uL18 family. As to quaternary structure, part of the 50S ribosomal subunit; part of the 5S rRNA/L5/L18/L25 subcomplex. Contacts the 5S and 23S rRNAs.

This is one of the proteins that bind and probably mediate the attachment of the 5S RNA into the large ribosomal subunit, where it forms part of the central protuberance. The sequence is that of Large ribosomal subunit protein uL18 from Bacillus licheniformis (strain ATCC 14580 / DSM 13 / JCM 2505 / CCUG 7422 / NBRC 12200 / NCIMB 9375 / NCTC 10341 / NRRL NRS-1264 / Gibson 46).